A 207-amino-acid polypeptide reads, in one-letter code: Small ribosomal subunit protein uS4 (207 aa).

Positions 31–55 (KCKLDSKPGQHGRTSGARTSDYGTQ) are disordered. Residues 42–53 (GRTSGARTSDYG) are compositionally biased toward polar residues. The S4 RNA-binding domain maps to 97-160 (SRLDNVVYRM…KKQARIVEAL (64 aa)).

It belongs to the universal ribosomal protein uS4 family. In terms of assembly, part of the 30S ribosomal subunit. Contacts protein S5. The interaction surface between S4 and S5 is involved in control of translational fidelity.

In terms of biological role, one of the primary rRNA binding proteins, it binds directly to 16S rRNA where it nucleates assembly of the body of the 30S subunit. With S5 and S12 plays an important role in translational accuracy. The sequence is that of Small ribosomal subunit protein uS4 from Burkholderia thailandensis (strain ATCC 700388 / DSM 13276 / CCUG 48851 / CIP 106301 / E264).